A 122-amino-acid polypeptide reads, in one-letter code: MASLLKAFIDPKKNFLARMHMKAISTRLRRYGLRYDDLYDQYYSMDIKEAMNRLPREVVDARNQRLKRAMDLSMKHEYLPKDLQAVQTPFRGYLQDMLALVERESKEREALGALPLYQRTLP.

This sequence belongs to the UQCRB/QCR7 family. In terms of assembly, component of the ubiquinol-cytochrome c oxidoreductase (cytochrome b-c1 complex, complex III, CIII), a multisubunit enzyme composed of 10 subunits. The complex is composed of 3 respiratory subunits cytochrome b (MT-CYB), cytochrome c1 (CYC1-1 or CYC1-2) and Rieske protein (UCR1-1 or UCR1-2), 2 core protein subunits MPPalpha1 (or MPPalpha2) and MPPB, and 5 low-molecular weight protein subunits QCR7-1 (or QCR7-2), UCRQ-1 (or UCRQ-2), QCR9, UCRY and probably QCR6-1 (or QCR6-2). The complex exists as an obligatory dimer and forms supercomplexes (SCs) in the inner mitochondrial membrane with NADH-ubiquinone oxidoreductase (complex I, CI), resulting in different assemblies (supercomplexes SCI(1)III(2) and SCI(2)III(4)).

It is found in the mitochondrion inner membrane. Functionally, component of the ubiquinol-cytochrome c oxidoreductase, a multisubunit transmembrane complex that is part of the mitochondrial electron transport chain which drives oxidative phosphorylation. The respiratory chain contains 3 multisubunit complexes succinate dehydrogenase (complex II, CII), ubiquinol-cytochrome c oxidoreductase (cytochrome b-c1 complex, complex III, CIII) and cytochrome c oxidase (complex IV, CIV), that cooperate to transfer electrons derived from NADH and succinate to molecular oxygen, creating an electrochemical gradient over the inner membrane that drives transmembrane transport and the ATP synthase. The cytochrome b-c1 complex catalyzes electron transfer from ubiquinol to cytochrome c, linking this redox reaction to translocation of protons across the mitochondrial inner membrane, with protons being carried across the membrane as hydrogens on the quinol. In the process called Q cycle, 2 protons are consumed from the matrix, 4 protons are released into the intermembrane space and 2 electrons are passed to cytochrome c. The polypeptide is Cytochrome b-c1 complex subunit 7-1, mitochondrial (QCR7-1) (Arabidopsis thaliana (Mouse-ear cress)).